Reading from the N-terminus, the 96-residue chain is Aspartyl/glutamyl-tRNA(Asn/Gln) amidotransferase subunit C (96 aa).

Belongs to the GatC family. Heterotrimer of A, B and C subunits.

The enzyme catalyses L-glutamyl-tRNA(Gln) + L-glutamine + ATP + H2O = L-glutaminyl-tRNA(Gln) + L-glutamate + ADP + phosphate + H(+). It carries out the reaction L-aspartyl-tRNA(Asn) + L-glutamine + ATP + H2O = L-asparaginyl-tRNA(Asn) + L-glutamate + ADP + phosphate + 2 H(+). In terms of biological role, allows the formation of correctly charged Asn-tRNA(Asn) or Gln-tRNA(Gln) through the transamidation of misacylated Asp-tRNA(Asn) or Glu-tRNA(Gln) in organisms which lack either or both of asparaginyl-tRNA or glutaminyl-tRNA synthetases. The reaction takes place in the presence of glutamine and ATP through an activated phospho-Asp-tRNA(Asn) or phospho-Glu-tRNA(Gln). In Sulfurovum sp. (strain NBC37-1), this protein is Aspartyl/glutamyl-tRNA(Asn/Gln) amidotransferase subunit C.